Reading from the N-terminus, the 1159-residue chain is Anillin-like protein 1 (1159 aa).

Disordered stretches follow at residues 43-81 (VASP…MKEN), 266-327 (QQVS…TKTT), 409-430 (KLKK…APVP), 549-608 (AIPK…GDVI), and 629-699 (FGFM…KSSS). A compositionally biased stretch (polar residues) spans 50–60 (FGSSSKCNDGP). Over residues 287-327 (ASSATSSSSSTTTLTTISGASGSTTSGISNAPQDSASTKTT) the composition is skewed to low complexity. The segment covering 421-430 (PPAPTSAPVP) has biased composition (pro residues). Positions 564-584 (SASSLYSQGARSNTASPASKS) are enriched in polar residues. The segment covering 660–684 (VIEEETENEDESEPYEPEEEEDDDA) has biased composition (acidic residues). The PH domain occupies 1029–1147 (DITYHGFLSM…WLSLINSTSK (119 aa)).

In terms of tissue distribution, strongly expressed in dividing neuroblasts under the ventral epidermal cells during ventral enclosure.

It localises to the cytoplasm. The protein localises to the cell cortex. It is found in the cytoskeleton. Its subcellular location is the spindle. The protein resides in the midbody. It localises to the cleavage furrow. Required for contractile events in embryos that occur prior to mitosis, such as cortical ruffling and pseudocleavage. Promotes membrane ruffling by organizing cortical patches of septins and myosin II. Not generally required for cytokinesis in mitotic cells. Required for the asymmetric cleavage events that extrude the two polar bodies during oocyte meiosis. Not required for meiotic contractile ring assembly, initiation or closure but is required for the transformation of the contractile ring from a disk above the spindle to a tube around the spindle midzone. Promotes astral microtubule-directed cortical myosin polarization and cleavage furrow ingression. Regulates neuroblast cytokinesis during mid- to late-embryogenesis and is required for ventral enclosure. The sequence is that of Anillin-like protein 1 (ani-1) from Caenorhabditis elegans.